The chain runs to 314 residues: R2-like ligand binding oxidase (314 aa).

Mn(2+) contacts are provided by Glu68, Glu101, and His104. A cross-link (3-(O4'-tyrosyl)-valine (Val-Tyr)) is located at residues 71–162 (VTEDIQPFMS…AAQVRASVTY (92 aa)). Glu101 contacts Fe cation. Fe cation is bound by residues Glu167, Glu202, and His205.

Belongs to the ribonucleoside diphosphate reductase small chain family. R2-like ligand binding oxidase subfamily. As to quaternary structure, homodimer. Fe cation is required as a cofactor. It depends on Mn(2+) as a cofactor.

Functionally, probable oxidase that might be involved in lipid metabolism. This Mycobacterium tuberculosis (strain ATCC 25177 / H37Ra) protein is R2-like ligand binding oxidase.